A 397-amino-acid polypeptide reads, in one-letter code: Enoyl-[acyl-carrier-protein] reductase [NADH] FabV (397 aa).

Residues 48–53, 74–75, 111–112, and 139–140 each bind NAD(+); these read GASTGY, FE, DA, and LA. Residue Tyr225 coordinates substrate. Tyr235 serves as the catalytic Proton donor. NAD(+) contacts are provided by residues Lys244 and 273–275; that span reads VVT.

The protein belongs to the TER reductase family. As to quaternary structure, monomer.

It carries out the reaction a 2,3-saturated acyl-[ACP] + NAD(+) = a (2E)-enoyl-[ACP] + NADH + H(+). Its pathway is lipid metabolism; fatty acid biosynthesis. With respect to regulation, resistant to triclosan. Involved in the final reduction of the elongation cycle of fatty acid synthesis (FAS II). Catalyzes the NADH-dependent reduction of the carbon-carbon double bond in the enoyl moiety that is covalently linked to an acyl carrier protein (ACP). This Aeromonas salmonicida (strain A449) protein is Enoyl-[acyl-carrier-protein] reductase [NADH] FabV.